The sequence spans 408 residues: Indian hedgehog protein (408 aa).

An N-terminal signal peptide occupies residues 1–23 (MKPARLLLLLSGCALLLAPAVRC). C24 carries N-palmitoyl cysteine lipidation. The Ca(2+) site is built by E90, E91, D96, T126, E127, D130, and D132. Zn(2+) is bound by residues H141, D148, and H183. G198 is lipidated: Cholesterol glycine ester.

It belongs to the hedgehog family. Multimer. In terms of assembly, interacts with BOC and CDON. Interacts with PTCH1. Interacts with glypican GPC3. Cholesterylation is required for N-product targeting to lipid rafts and multimerization. Post-translationally, the C-terminal domain displays an autoproteolysis activity and a cholesterol transferase activity. Both activities result in the cleavage of the full-length protein and covalent attachment of a cholesterol moiety to the C-terminal of the newly generated N-product. The N-product is the active species in both local and long-range signaling, whereas the C-product is degraded in the endoplasmic reticulum. In terms of processing, N-palmitoylation by HHAT of N-product is required for indian hedgehog protein N-product multimerization and full activity. As to expression, expressed in developing midgut, lung and cartilage of developing long bones in the limb.

It localises to the cell membrane. It is found in the endoplasmic reticulum membrane. Its subcellular location is the golgi apparatus membrane. The protein localises to the secreted. The catalysed reaction is glycyl-L-cysteinyl-[protein] + cholesterol + H(+) = [protein]-C-terminal glycyl cholesterol ester + N-terminal L-cysteinyl-[protein]. Its function is as follows. Plays a role in embryonic morphogenesis; it is involved in the regulation of endochondral skeleton formation, and the development of retinal pigment epithelium (RPE), photoreceptors and periocular tissues. Functionally, the C-terminal part of the indian hedgehog protein precursor displays an autoproteolysis and a cholesterol transferase activity. Both activities result in the cleavage of the full-length protein into two parts followed by the covalent attachment of a cholesterol moiety to the C-terminal of the newly generated N-product. Both activities occur in the endoplasmic reticulum. The dually lipidated indian hedgehog protein N-product is a morphogen which is essential for a variety of patterning events during development. Binds to the patched (PTCH1) receptor, which functions in association with smoothened (SMO), to activate the transcription of target genes. Plays a role in morphogenesis of the skeleton by coordinating growth and differentiation of the endochondral skeleton. Positively regulates PTHLH expression during endochondral bone formation preventing chondrocyte hypertrophy. In contrast, participates in normal chondrocyte proliferation in a PTHLH-independent pathway. The chain is Indian hedgehog protein from Gallus gallus (Chicken).